The chain runs to 357 residues: tRNA N6-adenosine threonylcarbamoyltransferase (357 aa).

2 residues coordinate Fe cation: histidine 115 and histidine 119. Residues 137 to 141 (LASGG), aspartate 170, glycine 183, and asparagine 281 each bind substrate. Position 309 (aspartate 309) interacts with Fe cation.

Belongs to the KAE1 / TsaD family. Requires Fe(2+) as cofactor.

It is found in the cytoplasm. The enzyme catalyses L-threonylcarbamoyladenylate + adenosine(37) in tRNA = N(6)-L-threonylcarbamoyladenosine(37) in tRNA + AMP + H(+). Required for the formation of a threonylcarbamoyl group on adenosine at position 37 (t(6)A37) in tRNAs that read codons beginning with adenine. Is involved in the transfer of the threonylcarbamoyl moiety of threonylcarbamoyl-AMP (TC-AMP) to the N6 group of A37, together with TsaE and TsaB. TsaD likely plays a direct catalytic role in this reaction. In Afipia carboxidovorans (strain ATCC 49405 / DSM 1227 / KCTC 32145 / OM5) (Oligotropha carboxidovorans), this protein is tRNA N6-adenosine threonylcarbamoyltransferase.